A 269-amino-acid polypeptide reads, in one-letter code: Imidazoleglycerol-phosphate dehydratase 1, chloroplastic (269 aa).

Disordered regions lie at residues 1–31 (MTTA…GSGG) and 54–73 (SGVG…VSSR). A chloroplast-targeting transit peptide spans 1-52 (MTTAPFVSPSLPRLHSARASPFPKPSVGSGGGVAFPARTYGSSLRLRSAVMS). Substrate-binding positions include glutamate 83, 109–117 (HMLDQLASH), 135–139 (HHSNE), arginine 161, and arginine 183. 4 residues coordinate Mn(2+): histidine 109, histidine 135, histidine 136, and glutamate 139. The Mn(2+) site is built by histidine 207, histidine 231, histidine 232, and glutamate 235. Residues 231–239 (HHIIEATFK) and 261–263 (SSK) each bind substrate.

Belongs to the imidazoleglycerol-phosphate dehydratase family. The cofactor is Mn(2+).

Its subcellular location is the plastid. The protein localises to the chloroplast. It carries out the reaction D-erythro-1-(imidazol-4-yl)glycerol 3-phosphate = 3-(imidazol-4-yl)-2-oxopropyl phosphate + H2O. It functions in the pathway amino-acid biosynthesis; L-histidine biosynthesis; L-histidine from 5-phospho-alpha-D-ribose 1-diphosphate: step 6/9. This is Imidazoleglycerol-phosphate dehydratase 1, chloroplastic from Triticum aestivum (Wheat).